The primary structure comprises 647 residues: Macrolide export ATP-binding/permease protein MacB (647 aa).

Positions 6–244 constitute an ABC transporter domain; the sequence is LEISGCYRTF…VDTAVTKINN (239 aa). Residue 42-49 coordinates ATP; the sequence is GASGSGKS. 4 helical membrane passes run 273–293, 522–542, 577–597, and 612–632; these read FLTM…VALG, LLIS…VMNI, LVCL…GVVF, and SIVA…FLPA.

The protein belongs to the ABC transporter superfamily. Macrolide exporter (TC 3.A.1.122) family. As to quaternary structure, homodimer. Part of the tripartite efflux system MacAB-TolC, which is composed of an inner membrane transporter, MacB, a periplasmic membrane fusion protein, MacA, and an outer membrane component, TolC. The complex forms a large protein conduit and can translocate molecules across both the inner and outer membranes. Interacts with MacA.

The protein localises to the cell inner membrane. Its function is as follows. Part of the tripartite efflux system MacAB-TolC. MacB is a non-canonical ABC transporter that contains transmembrane domains (TMD), which form a pore in the inner membrane, and an ATP-binding domain (NBD), which is responsible for energy generation. Confers resistance against macrolides. The sequence is that of Macrolide export ATP-binding/permease protein MacB from Shewanella sp. (strain W3-18-1).